Here is a 205-residue protein sequence, read N- to C-terminus: Anaerobic dimethyl sulfoxide reductase chain B (205 aa).

3 consecutive 4Fe-4S ferredoxin-type domains span residues 5-33 (YGFFIDSSRCTGCKTCELACKDYKDLTPE), 59-89 (FAYYLSISCNHCEDPACTKVCPSGAMHKRED), and 90-119 (GFVVVDEDVCIGCRYCHMACPYGAPQYNET). The [4Fe-4S] cluster site is built by Cys-14, Cys-17, Cys-20, Cys-24, Cys-67, Cys-70, Cys-75, Cys-79, Cys-99, Cys-102, Cys-105, Cys-109, Cys-126, Cys-129, Cys-141, and Cys-145. The interval 184–205 (KPNANSRPTGDTTGYLANPKEV) is disordered. Polar residues predominate over residues 186–195 (NANSRPTGDT).

Heterotrimeric enzyme composed of a catalytic heterodimer (DmsAB) and a membrane anchor protein (DmsC). [4Fe-4S] cluster is required as a cofactor.

In terms of biological role, electron transfer subunit of the terminal reductase during anaerobic growth on various sulfoxide and N-oxide compounds. This chain is Anaerobic dimethyl sulfoxide reductase chain B (dmsB), found in Escherichia coli (strain K12).